The chain runs to 324 residues: Ribose-phosphate pyrophosphokinase (324 aa).

Residues 45 to 47 (NGE) and 104 to 105 (RQ) each bind ATP. Mg(2+) is bound by residues His-138 and Asp-178. Residue Lys-201 is part of the active site. D-ribose 5-phosphate contacts are provided by residues Arg-203, Asp-229, and 233-237 (DTGGT).

This sequence belongs to the ribose-phosphate pyrophosphokinase family. Class I subfamily. In terms of assembly, homohexamer. The cofactor is Mg(2+).

It localises to the cytoplasm. It catalyses the reaction D-ribose 5-phosphate + ATP = 5-phospho-alpha-D-ribose 1-diphosphate + AMP + H(+). Its pathway is metabolic intermediate biosynthesis; 5-phospho-alpha-D-ribose 1-diphosphate biosynthesis; 5-phospho-alpha-D-ribose 1-diphosphate from D-ribose 5-phosphate (route I): step 1/1. Its function is as follows. Involved in the biosynthesis of the central metabolite phospho-alpha-D-ribosyl-1-pyrophosphate (PRPP) via the transfer of pyrophosphoryl group from ATP to 1-hydroxyl of ribose-5-phosphate (Rib-5-P). This chain is Ribose-phosphate pyrophosphokinase, found in Streptomyces coelicolor (strain ATCC BAA-471 / A3(2) / M145).